The chain runs to 263 residues: Hydroxyacylglutathione hydrolase (263 aa).

Zn(2+) is bound by residues His-55, His-57, Asp-59, His-60, His-117, Asp-134, and His-172.

The protein belongs to the metallo-beta-lactamase superfamily. Glyoxalase II family. Monomer. It depends on Zn(2+) as a cofactor.

It carries out the reaction an S-(2-hydroxyacyl)glutathione + H2O = a 2-hydroxy carboxylate + glutathione + H(+). Its pathway is secondary metabolite metabolism; methylglyoxal degradation; (R)-lactate from methylglyoxal: step 2/2. Thiolesterase that catalyzes the hydrolysis of S-D-lactoyl-glutathione to form glutathione and D-lactic acid. This Shewanella baltica (strain OS223) protein is Hydroxyacylglutathione hydrolase.